A 408-amino-acid chain; its full sequence is DNA primase DnaG (408 aa).

Positions 172 to 248 (DSIIIVEGRA…HVDYIARAPP (77 aa)) constitute a Toprim domain. The Mg(2+) site is built by Glu178, Asp222, and Asp224. The segment at 279–304 (AAGEKAETPQQPPPQQPVPQQEVREE) is disordered.

This sequence belongs to the archaeal DnaG primase family. In terms of assembly, forms a ternary complex with MCM helicase and DNA. Component of the archaeal exosome complex. Mg(2+) is required as a cofactor.

The catalysed reaction is ssDNA + n NTP = ssDNA/pppN(pN)n-1 hybrid + (n-1) diphosphate.. Functionally, RNA polymerase that catalyzes the synthesis of short RNA molecules used as primers for DNA polymerase during DNA replication. Also part of the exosome, which is a complex involved in RNA degradation. Acts as a poly(A)-binding protein that enhances the interaction between heteromeric, adenine-rich transcripts and the exosome. This Pyrobaculum aerophilum (strain ATCC 51768 / DSM 7523 / JCM 9630 / CIP 104966 / NBRC 100827 / IM2) protein is DNA primase DnaG.